Reading from the N-terminus, the 78-residue chain is Delta-conotoxin TxVIA (78 aa).

The signal sequence occupies residues 1–22 (MKLTCMMIVAVLFLTAWTFATA). Residues 23 to 49 (DDSGNGLENLFSNAHHQMKNPEASKLN) constitute a propeptide that is removed on maturation. 3 disulfide bridges follow: Cys53–Cys68, Cys60–Cys72, and Cys67–Cys77. Met59 is modified (methionine sulfoxide; partial).

This sequence belongs to the conotoxin O1 superfamily. Expressed by the venom duct. Is present in all duct parts with a highest content in part 4 (distal part near the pharynx).

The protein resides in the secreted. Its function is as follows. Delta-conotoxins bind to site 6 of voltage-gated sodium channels (Nav) and inhibit the inactivation process. Binding of this toxin is strongly calcium-dependent but not voltage-dependent. The binding site is most likely on the extracellular side of the sodium channel. Binds receptor sites on both mollusk and rat central nervous system, but despite its high affinity binding to rat sodium channel, it has no functional effect in vivo and in vitro on it. Also has no effect on Gambusia fish. Is important in mollusk for the paralysis of the prey. Upon injection of the peptide, a subordinate lobster assumes an exaggerated dominant posture (of a 'King-Kong' lobster!). The sequence is that of Delta-conotoxin TxVIA from Conus textile (Cloth-of-gold cone).